A 236-amino-acid chain; its full sequence is Sensory rhodopsin I (236 aa).

The next 7 membrane-spanning stretches (helical) occupy residues 6 to 26, 37 to 57, 74 to 94, 98 to 118, 126 to 146, 167 to 187, and 192 to 212; these read VVYG…GFLY, ILAA…AMVF, YLDW…TAGA, AIFG…GAVV, ALFG…YLIF, VGLL…GLGF, and GVSI…VYFF. Residue Lys205 is modified to N6-(retinylidene)lysine.

It belongs to the archaeal/bacterial/fungal opsin family. In terms of assembly, interacts with Htr1. In terms of processing, the covalent binding of retinal to the apoprotein, bacterioopsin, generates bacteriorhodopsin.

It is found in the membrane. In terms of biological role, photoattractant rhodopsin. The protein is Sensory rhodopsin I (sop1) of Haloarcula marismortui (strain ATCC 43049 / DSM 3752 / JCM 8966 / VKM B-1809) (Halobacterium marismortui).